We begin with the raw amino-acid sequence, 281 residues long: Pantothenate synthetase (281 aa).

30–37 (MGYLHEGH) provides a ligand contact to ATP. The active-site Proton donor is His-37. Gln-60 is a (R)-pantoate binding site. Gln-60 provides a ligand contact to beta-alanine. 146-149 (GEKD) serves as a coordination point for ATP. Position 152 (Gln-152) interacts with (R)-pantoate. Residues Ile-175 and 183–186 (KSSR) each bind ATP.

Belongs to the pantothenate synthetase family. In terms of assembly, homodimer.

The protein resides in the cytoplasm. It catalyses the reaction (R)-pantoate + beta-alanine + ATP = (R)-pantothenate + AMP + diphosphate + H(+). The protein operates within cofactor biosynthesis; (R)-pantothenate biosynthesis; (R)-pantothenate from (R)-pantoate and beta-alanine: step 1/1. Its function is as follows. Catalyzes the condensation of pantoate with beta-alanine in an ATP-dependent reaction via a pantoyl-adenylate intermediate. The chain is Pantothenate synthetase from Ruminiclostridium cellulolyticum (strain ATCC 35319 / DSM 5812 / JCM 6584 / H10) (Clostridium cellulolyticum).